Here is a 245-residue protein sequence, read N- to C-terminus: Ribosomal RNA small subunit methyltransferase G (245 aa).

S-adenosyl-L-methionine contacts are provided by residues Gly-79, Phe-84, 130–131 (AE), and Arg-150.

The protein belongs to the methyltransferase superfamily. RNA methyltransferase RsmG family.

The protein localises to the cytoplasm. Specifically methylates the N7 position of a guanine in 16S rRNA. This is Ribosomal RNA small subunit methyltransferase G from Limosilactobacillus fermentum (strain NBRC 3956 / LMG 18251) (Lactobacillus fermentum).